Reading from the N-terminus, the 600-residue chain is Probable tripeptidyl-peptidase SED4 (600 aa).

Positions 1–22 (MVSFTLRAIGACLIGLPALITA) are cleaved as a signal peptide. Residues 23 to 202 (APTSHVSNGF…SVFTSDLEMT (180 aa)) constitute a propeptide, removed in mature form. Residues Asn210 and Asn281 are each glycosylated (N-linked (GlcNAc...) asparagine). A Peptidase S53 domain is found at 212–600 (TITPDCIREL…FEKLSKLVLI (389 aa)). Residues Glu288 and Asp292 each act as charge relay system in the active site. Asn323 and Asn404 each carry an N-linked (GlcNAc...) asparagine glycan. The active-site Charge relay system is Ser504. Ca(2+) contacts are provided by Asp546, Ile547, Gly579, and Asp581.

Requires Ca(2+) as cofactor.

Its subcellular location is the secreted. It is found in the extracellular space. It carries out the reaction Release of an N-terminal tripeptide from a polypeptide.. Secreted tripeptidyl-peptidase which degrades proteins at acidic pHs and is involved in virulence. This Trichophyton verrucosum (strain HKI 0517) protein is Probable tripeptidyl-peptidase SED4 (SED4).